A 113-amino-acid chain; its full sequence is Dolichyl-diphosphooligosaccharide--protein glycosyltransferase subunit DAD1 (113 aa).

Topologically, residues Met-1 to Tyr-30 are cytoplasmic. Residues Leu-31–Phe-51 form a helical membrane-spanning segment. Position 52 (Pro-52) is a topological domain, lumenal. The helical transmembrane segment at Phe-53 to Leu-73 threads the bilayer. Over Arg-74–Arg-92 the chain is Cytoplasmic. Residues Ala-93 to Gly-113 traverse the membrane as a helical segment.

Belongs to the DAD/OST2 family. As to quaternary structure, component of the oligosaccharyltransferase (OST) complex. In terms of tissue distribution, widely expressed. Greatest expression seen in the epidermis, intermediate expression in the fat body and midgut and mild expression observed in the silk gland.

The protein resides in the endoplasmic reticulum membrane. It functions in the pathway protein modification; protein glycosylation. Functionally, subunit of the oligosaccharyl transferase (OST) complex that catalyzes the initial transfer of a defined glycan (Glc(3)Man(9)GlcNAc(2) in eukaryotes) from the lipid carrier dolichol-pyrophosphate to an asparagine residue within an Asn-X-Ser/Thr consensus motif in nascent polypeptide chains, the first step in protein N-glycosylation. N-glycosylation occurs cotranslationally and the complex associates with the Sec61 complex at the channel-forming translocon complex that mediates protein translocation across the endoplasmic reticulum (ER). All subunits are required for a maximal enzyme activity. In Araneus ventricosus (Orbweaver spider), this protein is Dolichyl-diphosphooligosaccharide--protein glycosyltransferase subunit DAD1.